We begin with the raw amino-acid sequence, 227 residues long: Lipoprotein-releasing system ATP-binding protein LolD (227 aa).

Residues 7 to 227 (LQLTGVERHY…TISDGKIVDF (221 aa)) form the ABC transporter domain. 43–50 (APSGTGKS) contributes to the ATP binding site.

This sequence belongs to the ABC transporter superfamily. Lipoprotein translocase (TC 3.A.1.125) family. As to quaternary structure, the complex is composed of two ATP-binding proteins (LolD) and two transmembrane proteins (LolC and LolE).

Its subcellular location is the cell inner membrane. In terms of biological role, part of the ABC transporter complex LolCDE involved in the translocation of mature outer membrane-directed lipoproteins, from the inner membrane to the periplasmic chaperone, LolA. Responsible for the formation of the LolA-lipoprotein complex in an ATP-dependent manner. The polypeptide is Lipoprotein-releasing system ATP-binding protein LolD (Rhizobium johnstonii (strain DSM 114642 / LMG 32736 / 3841) (Rhizobium leguminosarum bv. viciae)).